Reading from the N-terminus, the 76-residue chain is Adipogenesis regulatory factor (76 aa).

As to expression, expressed in adipose tissue (at protein level). Highly expressed in omental and subcutaneous adipose tissues. Expressed in heart, cornea, liver, kidney and spleen.

The protein resides in the nucleus. Plays a role in fat cell development; promotes adipogenic differentiation and stimulates transcription initiation of master adipogenesis factors like PPARG and CEBPA at early stages of preadipocyte differentiation. Its overexpression confers resistance to the anticancer chemotherapeutic drug cisplatin. The protein is Adipogenesis regulatory factor (ADIRF) of Homo sapiens (Human).